The sequence spans 56 residues: Stable protein 1 (56 aa).

The region spanning 1-44 is the Stress-response A/B barrel domain; sequence GYTHAFESTFESKSGLQEYLDSAALAAFAEGFLPTLSQRSFNWG.

The chain is Stable protein 1 from Populus euphratica (Euphrates poplar).